The chain runs to 343 residues: N6-succino-2-amino-2'-deoxyadenylate synthase (343 aa).

Ser-14 functions as the Proton acceptor in the catalytic mechanism. Ser-14, Thr-15, Gly-16, Lys-17, and Gly-18 together coordinate ATP. Residue Ser-14 participates in dGMP binding. A Mg(2+)-binding site is contributed by Ser-14. Asn-40 contributes to the dGMP binding site. Positions 42, 43, and 44 each coordinate ATP. Gly-42 serves as a coordination point for Mg(2+). DGMP is bound by residues Ser-127, Thr-128, and Arg-142. Gln-187 provides a ligand contact to ATP. Thr-202 serves as a coordination point for dGMP. Residue Thr-263 coordinates Mg(2+). 3 residues coordinate L-aspartate: Thr-263, Val-264, and Arg-269. ATP is bound by residues Asn-294, Asn-297, and Gly-330.

This sequence belongs to the Caudovirales PurZ family. It depends on Mg(2+) as a cofactor.

The catalysed reaction is dGMP + L-aspartate + ATP = (2S)-2-amino-2'-deoxyadenylo-succinate + ADP + phosphate + 2 H(+). The protein operates within purine metabolism. Functionally, involved in the synthesis of the atypical nucleotide dZTP (2-amino-2'-deoxyadenosine-5'-triphosphate). Catalyzes the condensation of aspartate with deoxyguanylate into dSMP (N6-succino-2-amino-2'-deoxyadenylate), which undergoes defumarylation and phosphorylation respectively by host PurB and guanylate/nucleoside diphosphate kinases to give dZTP. dZTP is integrated into the viral genome instead of adenine by the viral DNA polymerase. This Z-base probably completely replaces adenosine and forms a triple bond to the opposite T-base. The resulting non-standard viral DNA is called Z-genome. The chemically modified DNA is probably harder for the host bacteria to digest with nucleases or restriction enzymes. This Vibrio phage phiVC8 protein is N6-succino-2-amino-2'-deoxyadenylate synthase.